The sequence spans 496 residues: Nitric oxide synthase, inducible (496 aa).

Residues Cys-6, Glu-32, and Gln-36 each contribute to the FMN site. Residues 101-341 (KNLFTMRLRS…VRSVSGFQLP (241 aa)) enclose the FAD-binding FR-type domain. An NADP(+)-binding site is contributed by Arg-121. FAD contacts are provided by His-143, Arg-277, Tyr-279, Ser-280, Thr-295, and Ala-297. Thr-300 provides a ligand contact to NADP(+). Residues Tyr-301, Val-314, Cys-315, and Ser-316 each coordinate FAD. Thr-355, Arg-388, Ser-417, Arg-418, Lys-424, Tyr-426, Gln-428, and Asp-461 together coordinate NADP(+).

This sequence belongs to the NOS family. In terms of assembly, homodimer. Interacts with NHERF1. Interacts with GAPDH; induced by oxidatively-modified low-densitity lipoprotein (LDL(ox)). Interacts with S100A8 and S100A9 to form the iNOS-S100A8/9 transnitrosylase complex. Interacts with SPSB1, SPSB2 and SPSB4. Interacts with ELOC and CUL5 in the presence of SPSB1 or SPSB2 or SPSB4. Forms a complex with ASL, ASS1 and HSP90AA1; the complex regulates cell-autonomous L-arginine synthesis and citrulline recycling while channeling extracellular L-arginine to nitric oxide synthesis pathway. Heme b serves as cofactor. The cofactor is FAD. It depends on FMN as a cofactor. (6R)-L-erythro-5,6,7,8-tetrahydrobiopterin is required as a cofactor. In terms of processing, polyubiquitinated; mediated by SPSB1, SPSB2 and SPSB4, leading to proteasomal degradation.

It is found in the cytoplasm. The protein localises to the cytosol. It catalyses the reaction 2 L-arginine + 3 NADPH + 4 O2 + H(+) = 2 L-citrulline + 2 nitric oxide + 3 NADP(+) + 4 H2O. Not stimulated by calcium/calmodulin. Its function is as follows. Produces nitric oxide (NO) which is a messenger molecule with diverse functions throughout the body. In macrophages, NO mediates tumoricidal and bactericidal actions. Also has nitrosylase activity and mediates cysteine S-nitrosylation of cytoplasmic target proteins such PTGS2/COX2. As component of the iNOS-S100A8/9 transnitrosylase complex involved in the selective inflammatory stimulus-dependent S-nitrosylation of GAPDH implicated in regulation of the GAIT complex activity and probably multiple targets including ANXA5, EZR, MSN and VIM. Involved in inflammation, enhances the synthesis of pro-inflammatory mediators such as IL6 and IL8. This Oryctolagus cuniculus (Rabbit) protein is Nitric oxide synthase, inducible (NOS2).